A 281-amino-acid polypeptide reads, in one-letter code: 32 kDa heat shock protein (281 aa).

Residues 142–168 (EDDEEIDSDEEFGDSDQDEEDSDDEEI) show a composition bias toward acidic residues. Positions 142-281 (EDDEEIDSDE…NENNKKKQKN (140 aa)) are disordered. Positions 180–209 (KITEISEVPESKKEKTPEPKKVPEPKKEQV) are enriched in basic and acidic residues. Residues 210-273 (KQPTQPQQKK…NNKRPQNQNE (64 aa)) are compositionally biased toward low complexity.

The polypeptide is 32 kDa heat shock protein (hspC) (Dictyostelium discoideum (Social amoeba)).